The sequence spans 560 residues: NADH-quinone oxidoreductase subunit C/D (560 aa).

Residues asparagine 2–leucine 157 form an NADH dehydrogenase I subunit C region. Residues lysine 175–arginine 560 are NADH dehydrogenase I subunit D.

It in the N-terminal section; belongs to the complex I 30 kDa subunit family. This sequence in the C-terminal section; belongs to the complex I 49 kDa subunit family. NDH-1 is composed of 13 different subunits. Subunits NuoB, CD, E, F, and G constitute the peripheral sector of the complex.

The protein localises to the cytoplasm. It is found in the cell inner membrane. It catalyses the reaction a quinone + NADH + 5 H(+)(in) = a quinol + NAD(+) + 4 H(+)(out). In terms of biological role, NDH-1 shuttles electrons from NADH, via FMN and iron-sulfur (Fe-S) centers, to quinones in the respiratory chain. The immediate electron acceptor for the enzyme in this species is believed to be ubiquinone. Couples the redox reaction to proton translocation (for every two electrons transferred, four hydrogen ions are translocated across the cytoplasmic membrane), and thus conserves the redox energy in a proton gradient. This is NADH-quinone oxidoreductase subunit C/D from Bdellovibrio bacteriovorus (strain ATCC 15356 / DSM 50701 / NCIMB 9529 / HD100).